The sequence spans 345 residues: UDP-N-acetylenolpyruvoylglucosamine reductase (345 aa).

The region spanning 15-218 (VDVYAEKVII…NTIIFLRYKK (204 aa)) is the FAD-binding PCMH-type domain. Arg161 is an active-site residue. Ser230 functions as the Proton donor in the catalytic mechanism. Glu327 is a catalytic residue.

It belongs to the MurB family. FAD serves as cofactor.

The protein localises to the cytoplasm. The catalysed reaction is UDP-N-acetyl-alpha-D-muramate + NADP(+) = UDP-N-acetyl-3-O-(1-carboxyvinyl)-alpha-D-glucosamine + NADPH + H(+). It participates in cell wall biogenesis; peptidoglycan biosynthesis. Cell wall formation. This Blochmanniella floridana protein is UDP-N-acetylenolpyruvoylglucosamine reductase.